Here is a 339-residue protein sequence, read N- to C-terminus: Trace amine-associated receptor 1 (339 aa).

Residues 1 to 24 are Extracellular-facing; that stretch reads MMPFCHNIINISCVKNNWSNDVRA. Intrachain disulfides connect cysteine 5/cysteine 178, cysteine 13/cysteine 88, and cysteine 96/cysteine 182. 2 N-linked (GlcNAc...) asparagine glycosylation sites follow: asparagine 10 and asparagine 17. The helical transmembrane segment at 25–49 threads the bilayer; that stretch reads SLYSLMVLIILTTLVGNLIVIVSIS. The Cytoplasmic segment spans residues 50-59; it reads HFKQLHTPTN. A helical membrane pass occupies residues 60–81; sequence WLIHSMATVDFLLGCLVMPYSM. The Extracellular portion of the chain corresponds to 82-96; the sequence is VRSAEHCWYFGEVFC. The helical transmembrane segment at 97–119 threads the bilayer; sequence KIHTSTDIMLSSASIFHLSFISI. A 2-phenylethylamine-binding site is contributed by aspartate 103. Over 120 to 139 the chain is Cytoplasmic; it reads DRYYAVCDPLRYKAKMNILV. Residues 140 to 161 traverse the membrane as a helical segment; it reads ICVMIFISWSVPAVFAFGMIFL. Topologically, residues 162 to 188 are extracellular; that stretch reads ELNFKGAEEIYYKHVHCRGGCSVFFSK. The extracellular Loop 2 (ECL2) stretch occupies residues 175 to 186; sequence HVHCRGGCSVFF. Residues 189–211 form a helical membrane-spanning segment; it reads ISGVLTFMTSFYIPGSIMLCVYY. At 212–249 the chain is on the cytoplasmic side; sequence RIYLIAKEQARLISDANQKLQIGLEMKNGISQSKERKA. Residues 250–273 traverse the membrane as a helical segment; the sequence is VKTLGIVMGVFLICWCPFFICTVM. The Extracellular segment spans residues 274 to 286; it reads DPFLHYIIPPTLN. Residues 287 to 307 traverse the membrane as a helical segment; it reads DVLIWFGYLNSTFNPMVYAFF. Residues 308–339 lie on the Cytoplasmic side of the membrane; sequence YPWFRKALKMMLFGKIFQKDSSRCKLFLELSS.

This sequence belongs to the G-protein coupled receptor 1 family. Expressed at low level in both the central and peripheral nervous system. Moderately expressed in stomach. Low levels in amygdala, kidney, and lung, and small intestine. Trace amounts in cerebellum, dorsal root ganglia, hippocampus, hypothalamus, liver, medulla, pancreas, pituitary, pontine reticular formation, prostate, skeletal muscle and spleen.

The protein resides in the endomembrane system. Its subcellular location is the endoplasmic reticulum membrane. It is found in the cell membrane. Its activity is regulated as follows. Activated by SEP-363856 small molecule: IHCH-7179 acts both as an agonist activator for HTR1A and TAAR1. Intracellular G-protein coupled receptor for trace amines, which recognizes endogenous amine-containing metabolites such as beta-phenylethylamine (beta-PEA), 3-iodothyronamine (T1AM), isoamylamine (IAA), cadaverine (CAD), cyclohexylamine (CHA), p-tyramine (p-TYR), trimethylamine (TMA), octopamine and tryptamine. Also functions as a receptor for various drugs and psychoactive substances, such as amphetamine and methamphetamine. Unresponsive to classical biogenic amines, such as epinephrine and histamine and only partially activated by dopamine and serotonin. Expressed in both the central and peripheral nervous system: TAAR1 activation regulates the activity of several neurotransmitter signaling pathways by (1) decreasing the basal firing rates of the neurons involved and by (2) lowering the sensitivity of receptors to neurotransmitters. Ligand binding causes a conformation change that triggers signaling via guanine nucleotide-binding proteins (G proteins) and modulates the activity of downstream effectors. TAAR1 is coupled with different G(i)/G(o)-, G(s)- or G(q)/G(11) classes of G alpha proteins depending on the ligand. CAD-binding is coupled to G(i)/G(o) G alpha proteins and mediates inhibition of adenylate cyclase activity. T1AM- or beta-PEA-binding is coupled to G(s) G alpha proteins and mediates activation of adenylate cyclase activity. CHA- or IAA-binding is coupled to G(q)/G(11) G alpha proteins and activates phospholipase C-beta, releasing diacylglycerol (DAG) and inositol 1,4,5-trisphosphate (IP3) second messengers. TMA-binding is coupled with all three G(i)/G(o)-, G(s)- or G(q)/G(11) G alpha protein subtypes. Amphetamine-binding is coupled with G(s)- or G(12)/G(13) G alpha protein subtypes. The protein is Trace amine-associated receptor 1 of Homo sapiens (Human).